Reading from the N-terminus, the 222-residue chain is PKHD-type hydroxylase P9301_13621 (222 aa).

One can recognise a Fe2OG dioxygenase domain in the interval 81 to 175; sequence KIHGIMFTKS…RLVCVGWIES (95 aa). Fe cation-binding residues include histidine 99, aspartate 101, and histidine 156. A 2-oxoglutarate-binding site is contributed by arginine 166.

Fe(2+) is required as a cofactor. The cofactor is L-ascorbate.

In Prochlorococcus marinus (strain MIT 9301), this protein is PKHD-type hydroxylase P9301_13621.